The chain runs to 95 residues: Small ribosomal subunit protein bS6 (95 aa).

It belongs to the bacterial ribosomal protein bS6 family.

Functionally, binds together with bS18 to 16S ribosomal RNA. In Aster yellows witches'-broom phytoplasma (strain AYWB), this protein is Small ribosomal subunit protein bS6.